Here is a 288-residue protein sequence, read N- to C-terminus: uncharacterized protein (288 aa).

Residues 6-20 (GFIG…MASH) and Thr97 contribute to the NAD(+) site. Lys172 is an active-site residue. Lys240 is a binding site for NAD(+).

It belongs to the HIBADH-related family.

Its subcellular location is the cell membrane. It is found in the membrane raft. This is an uncharacterized protein from Bacillus subtilis (strain 168).